The primary structure comprises 216 residues: Octanoyltransferase (216 aa).

The 184-residue stretch at 33–216 (AATADELWIV…ANRLSTSLSR (184 aa)) folds into the BPL/LPL catalytic domain. Residues 72 to 79 (RGGEVTYH), 148 to 150 (ALG), and 162 to 164 (GVS) contribute to the substrate site. Cys180 (acyl-thioester intermediate) is an active-site residue.

The protein belongs to the LipB family.

The protein resides in the cytoplasm. The catalysed reaction is octanoyl-[ACP] + L-lysyl-[protein] = N(6)-octanoyl-L-lysyl-[protein] + holo-[ACP] + H(+). Its pathway is protein modification; protein lipoylation via endogenous pathway; protein N(6)-(lipoyl)lysine from octanoyl-[acyl-carrier-protein]: step 1/2. Catalyzes the transfer of endogenously produced octanoic acid from octanoyl-acyl-carrier-protein onto the lipoyl domains of lipoate-dependent enzymes. Lipoyl-ACP can also act as a substrate although octanoyl-ACP is likely to be the physiological substrate. In Janthinobacterium sp. (strain Marseille) (Minibacterium massiliensis), this protein is Octanoyltransferase.